We begin with the raw amino-acid sequence, 193 residues long: Cysteine and glycine-rich protein 1 (193 aa).

The region spanning Cys10–Cys61 is the LIM zinc-binding 1 domain. The Nuclear localization signal motif lies at Lys64 to Lys69. Ser81 is modified (phosphoserine). Lys84 carries the post-translational modification N6-acetyllysine. Lys91 is covalently cross-linked (Glycyl lysine isopeptide (Lys-Gly) (interchain with G-Cter in SUMO2)). N6-acetyllysine is present on residues Lys112, Lys131, Lys137, and Lys161. Residues Cys119–Cys170 form the LIM zinc-binding 2 domain. Ser192 is subject to Phosphoserine.

In terms of assembly, interacts with ASCC1; ASCC2 and TRIP4.

The protein resides in the nucleus. Functionally, could play a role in neuronal development. This chain is Cysteine and glycine-rich protein 1 (Csrp1), found in Mus musculus (Mouse).